Consider the following 2293-residue polypeptide: Protein Ycf2 (2293 aa).

1642 to 1649 is a binding site for ATP; the sequence is GSIGTGRS.

It belongs to the Ycf2 family.

It localises to the plastid. Its subcellular location is the chloroplast stroma. Its function is as follows. Probable ATPase of unknown function. Its presence in a non-photosynthetic plant (Epifagus virginiana) and experiments in tobacco indicate that it has an essential function which is probably not related to photosynthesis. This Platanus occidentalis (Sycamore) protein is Protein Ycf2.